A 210-amino-acid polypeptide reads, in one-letter code: Chloramphenicol acetyltransferase (210 aa).

The active site involves H79.

It belongs to the transferase hexapeptide repeat family.

It catalyses the reaction chloramphenicol + acetyl-CoA = chloramphenicol 3-acetate + CoA. In terms of biological role, this enzyme is an effector of chloramphenicol resistance in bacteria. This Morganella morganii (Proteus morganii) protein is Chloramphenicol acetyltransferase (cat).